Reading from the N-terminus, the 1187-residue chain is Phospholipid-transporting ATPase IH (1187 aa).

Topologically, residues 1 to 61 (MDCSLLRTLV…SSKYTFWNFI (61 aa)) are cytoplasmic. A helical membrane pass occupies residues 62 to 82 (PKNLFEQFRRIANFYFLIIFL). At 83–88 (VQLIID) the chain is on the extracellular side. The chain crosses the membrane as a helical span at residues 89 to 110 (TPTSPVTSGLPLFFVITVTAIK). The Cytoplasmic segment spans residues 111-296 (QGYEDWLRHK…SAVEKSMNTF (186 aa)). The chain crosses the membrane as a helical span at residues 297–318 (LIVYLCILVSKALINTVLKYVW). Residues 319-349 (QSEPFRDEPWYNEKTESERQRNLFLRAFTDF) are Extracellular-facing. The chain crosses the membrane as a helical span at residues 350-372 (LAFMVLFNYIIPVSMYVTVEMQK). Over 373–884 (FLGSYFITWD…GHFYYIRISE (512 aa)) the chain is Cytoplasmic. Asp-414 (4-aspartylphosphate intermediate) is an active-site residue. Asp-414, Lys-415, Thr-416, Glu-513, Phe-555, Lys-578, Arg-609, Thr-689, Gly-690, and Asp-691 together coordinate ATP. Asp-414 is a Mg(2+) binding site. Thr-416 lines the Mg(2+) pocket. A Phosphoserine modification is found at Ser-740. The ATP site is built by Arg-801 and Lys-807. Asp-828 lines the Mg(2+) pocket. Positions 831 and 832 each coordinate ATP. Position 832 (Asp-832) interacts with Mg(2+). The helical transmembrane segment at 885–905 (LVQYFFYKNVCFIFPQFLYQF) threads the bilayer. Residues 906-917 (FCGFSQQTLYDT) are Extracellular-facing. The chain crosses the membrane as a helical span at residues 918–937 (AYLTLYNISFTSLPILLYSL). Residues 938-967 (MEQHVGIDVLKRDPTLYRDIAKNALLRWRV) lie on the Cytoplasmic side of the membrane. A helical transmembrane segment spans residues 968–989 (FIYWTFLGVFDALVFFFGAYFI). The Extracellular segment spans residues 990 to 1003 (FENTTVTINGQMFG). A helical membrane pass occupies residues 1004 to 1026 (NWTFGTLVFTVMVLTVTLKLALD). The Cytoplasmic portion of the chain corresponds to 1027–1032 (THYWTW). Residues 1033–1053 (INHFVIWGSLLFYIAFSLLWG) form a helical membrane-spanning segment. Residues 1054–1071 (GVIWPFLSYQRMYYVFIS) lie on the Extracellular side of the membrane. A helical transmembrane segment spans residues 1072 to 1096 (MLSSGPAWLGIILLVTVGLLPDVLK). Residues 1097 to 1138 (KVLCRQLWPTATERTQNIQHQDSISEFTPLASLPSWGAQGSR) lie on the Cytoplasmic side of the membrane. Phosphoserine is present on residues Ser-1148 and Ser-1158.

The protein belongs to the cation transport ATPase (P-type) (TC 3.A.3) family. Type IV subfamily. As to quaternary structure, component of a P4-ATPase flippase complex which consists of a catalytic alpha subunit ATP11A and an accessory beta subunit TMEM30A. Requires Mg(2+) as cofactor. Post-translationally, proteolytically cleaved by CASP3. As to expression, widely expressed. Expressed in myoblasts. Expressed in retina, brain, liver, testes and kidney (at protein level). Expressed in the inner ear.

It localises to the cell membrane. The protein resides in the early endosome. Its subcellular location is the recycling endosome. It is found in the endoplasmic reticulum membrane. It catalyses the reaction ATP + H2O + phospholipidSide 1 = ADP + phosphate + phospholipidSide 2.. It carries out the reaction a 1,2-diacyl-sn-glycero-3-phospho-L-serine(out) + ATP + H2O = a 1,2-diacyl-sn-glycero-3-phospho-L-serine(in) + ADP + phosphate + H(+). The catalysed reaction is a 1,2-diacyl-sn-glycero-3-phosphoethanolamine(out) + ATP + H2O = a 1,2-diacyl-sn-glycero-3-phosphoethanolamine(in) + ADP + phosphate + H(+). Functionally, catalytic component of a P4-ATPase flippase complex which catalyzes the hydrolysis of ATP coupled to the transport of aminophospholipids, phosphatidylserines (PS) and phosphatidylethanolamines (PE), from the outer to the inner leaflet of the plasma membrane. Does not show flippase activity toward phosphatidylcholine (PC). Contributes to the maintenance of membrane lipid asymmetry with a specific role in morphogenesis of muscle cells. In myoblasts, mediates PS enrichment at the inner leaflet of plasma membrane, triggering PIEZO1-dependent Ca2+ influx and Rho GTPases signal transduction, subsequently leading to the assembly of cortical actomyosin fibers and myotube formation. The protein is Phospholipid-transporting ATPase IH (Atp11a) of Mus musculus (Mouse).